Here is a 409-residue protein sequence, read N- to C-terminus: Peptidase T (409 aa).

His-79 is a binding site for Zn(2+). Residue Asp-81 is part of the active site. A Zn(2+)-binding site is contributed by Asp-140. Glu-174 functions as the Proton acceptor in the catalytic mechanism. Zn(2+)-binding residues include Glu-175, Asp-197, and His-379.

The protein belongs to the peptidase M20B family. Zn(2+) is required as a cofactor.

It is found in the cytoplasm. It carries out the reaction Release of the N-terminal residue from a tripeptide.. Cleaves the N-terminal amino acid of tripeptides. The polypeptide is Peptidase T (Lysinibacillus sphaericus (strain C3-41)).